A 692-amino-acid polypeptide reads, in one-letter code: Protein arginine N-methyltransferase 7 (692 aa).

SAM-dependent MTase PRMT-type domains lie at 14 to 345 (SLEW…YCVW) and 358 to 684 (SAYQ…ITME). R32 is subject to Omega-N-methylarginine. Residues E144 and E153 contribute to the active site.

This sequence belongs to the class I-like SAM-binding methyltransferase superfamily. Protein arginine N-methyltransferase family. PRMT7 subfamily. In terms of assembly, homodimer and heterodimer. Interacts with PRMT5 and SNRPD3. Interacts with CTCFL.

Its subcellular location is the cytoplasm. The protein resides in the cytosol. It localises to the nucleus. The catalysed reaction is L-arginyl-[protein] + S-adenosyl-L-methionine = N(omega)-methyl-L-arginyl-[protein] + S-adenosyl-L-homocysteine + H(+). In terms of biological role, arginine methyltransferase that can both catalyze the formation of omega-N monomethylarginine (MMA) and symmetrical dimethylarginine (sDMA), with a preference for the formation of MMA. Specifically mediates the symmetrical dimethylation of arginine residues in the small nuclear ribonucleoproteins Sm D1 (SNRPD1) and Sm D3 (SNRPD3); such methylation being required for the assembly and biogenesis of snRNP core particles. Specifically mediates the symmetric dimethylation of histone H4 'Arg-3' to form H4R3me2s. Plays a role in gene imprinting by being recruited by CTCFL at the H19 imprinted control region (ICR) and methylating histone H4 to form H4R3me2s, possibly leading to recruit DNA methyltransferases at these sites. May also play a role in embryonic stem cell (ESC) pluripotency. Also able to mediate the arginine methylation of histone H2A and myelin basic protein (MBP) in vitro; the relevance of such results is however unclear in vivo. The chain is Protein arginine N-methyltransferase 7 (Prmt7) from Mus musculus (Mouse).